We begin with the raw amino-acid sequence, 360 residues long: Histidinol-phosphate aminotransferase (360 aa).

Lys223 is modified (N6-(pyridoxal phosphate)lysine).

Belongs to the class-II pyridoxal-phosphate-dependent aminotransferase family. Histidinol-phosphate aminotransferase subfamily. Homodimer. It depends on pyridoxal 5'-phosphate as a cofactor.

It carries out the reaction L-histidinol phosphate + 2-oxoglutarate = 3-(imidazol-4-yl)-2-oxopropyl phosphate + L-glutamate. The protein operates within amino-acid biosynthesis; L-histidine biosynthesis; L-histidine from 5-phospho-alpha-D-ribose 1-diphosphate: step 7/9. The sequence is that of Histidinol-phosphate aminotransferase from Bacillus subtilis subsp. natto.